The sequence spans 115 residues: Holo-[acyl-carrier-protein] synthase (115 aa).

2 residues coordinate Mg(2+): D8 and E50.

Belongs to the P-Pant transferase superfamily. AcpS family. Requires Mg(2+) as cofactor.

Its subcellular location is the cytoplasm. It catalyses the reaction apo-[ACP] + CoA = holo-[ACP] + adenosine 3',5'-bisphosphate + H(+). Functionally, transfers the 4'-phosphopantetheine moiety from coenzyme A to a Ser of acyl-carrier-protein. The sequence is that of Holo-[acyl-carrier-protein] synthase from Pseudarthrobacter chlorophenolicus (strain ATCC 700700 / DSM 12829 / CIP 107037 / JCM 12360 / KCTC 9906 / NCIMB 13794 / A6) (Arthrobacter chlorophenolicus).